The chain runs to 80 residues: SPI-1 type 3 secretion system needle filament protein (80 aa).

The protein belongs to the SctF family. In terms of assembly, the core secretion machinery of the T3SS is composed of approximately 20 different proteins, including cytoplasmic components, a base, an export apparatus and a needle. This subunit polymerizes and forms the helical needle filament. Interacts with the needle tip protein SipD/SctA. Interacts with the needle adapter protein PrgJ/SctI, the secretin InvG/SctC and the minor export apparatus protein SpaP/SctR. In vitro, the needle protomer refolds spontaneously to extend the needle from the distal end.

It is found in the secreted. Its subcellular location is the cell surface. Binding of bile salts, including deoxycholate, to the PrgI:SipD interface may inhibit the T3SS function. Its function is as follows. Component of the type III secretion system (T3SS), also called injectisome, which is used to inject bacterial effector proteins into eukaryotic host cells. PrgI/SctF1 forms the external needle filament that protrudes from the bacterial surface. Is probably involved in the transduction of an activating signal, thought to be mediated by the distal tip of the needle filament, to the secretion machine. Required for invasion of epithelial cells. Required for the secretion of the effector protein SptP. Functionally, during infection, can induce innate immune responses. The needle proteins interact with host TLR2 or TLR4, and induce signaling by NF-kappa-B and/or AP-1. This activation is MyD88 dependent and results in increased expression of cytokines, including TNF-alpha, IL-6 and IL-8. The sequence is that of SPI-1 type 3 secretion system needle filament protein from Salmonella typhimurium (strain LT2 / SGSC1412 / ATCC 700720).